A 225-amino-acid chain; its full sequence is MSLPEPLLRAGWPRERLLRHGAATLSDPELLALALRTGVAGCNAVQLGHDLLRRFGGLRGLLGTSPAELQVVPGLGTAKACVLAAVLELARRTLEEDLVRQDALANPDLVRRYCQAALGHRKVEHCIALYLDARLKLIICAEVARGTLTQAQIYPREIVREALRHHAAALILAHNHPGGTAAASAADIAMTRQIRQALALVDVRLIDHVIVAGAATVSMAAQGHL.

Residues Ala-103–Leu-225 form the MPN domain. His-174, His-176, and Asp-187 together coordinate Zn(2+). Positions His-174–Asp-187 match the JAMM motif motif.

This sequence belongs to the UPF0758 family.

The polypeptide is UPF0758 protein BPP1850 (Bordetella parapertussis (strain 12822 / ATCC BAA-587 / NCTC 13253)).